We begin with the raw amino-acid sequence, 642 residues long: MPVITLPDGSQRHYDHAVSPMDVALDIGPGLAKACIAGRVNGELVDACDLIENDTQLSIITAKDEEGLEIIRHSCAHLLGHAIKQLWPHTKMAIGPVIDNGFYYDVDLDRTLTQEDVEALEKRMHELAEKNYDVIKKKVSWHEARETFANRGESYKVSILDENIAHDDKPGLYFHEEYVDMCRGPHVPNMRFCHHFKLMKTAGAYWRGDSNNKMLQRIYGTAWADKKALNAYLQRLEEAAKRDHRKIGKQLDLYHMQEEAPGMVFWHNDGWTIFRELEVFVRSKLKEYQYQEVKGPFMMDRVLWEKTGHWDNYKDAMFTTSSENREYCIKPMNCPGHVQIFNQGLKSYRDLPLRMAEFGSCHRNEPSGSLHGLMRVRGFTQDDAHIFCTEEQIRDEVNGCIRLVYDMYSTFGFEKIVVKLSTRPEKRIGSDEMWDRAEADLAVALEENNIPFEYQLGEGAFYGPKIEFTLYDCLDRAWQCGTVQLDFSLPSRLSASYVGEDNERKVPVMIHRAILGSMERFIGILTEEFAGFFPTWLAPVQVVIMNITDSQSDYVNELTQKLSNAGIRVKADLRNEKIGFKIREHTLRRVPYMLVCGDKEVESGKVAVRTRRGKELGSMDVNEVIEKLQQEIRSRSLKQLEE.

Residues 1 to 61 (MPVITLPDGS…ENDTQLSIIT (61 aa)) form the TGS domain. The catalytic stretch occupies residues 243-534 (DHRKIGKQLD…LTEEFAGFFP (292 aa)). An N6-acetyllysine modification is found at Lys286. Positions 334, 385, and 511 each coordinate Zn(2+).

Belongs to the class-II aminoacyl-tRNA synthetase family. As to quaternary structure, homodimer. It depends on Zn(2+) as a cofactor.

Its subcellular location is the cytoplasm. It catalyses the reaction tRNA(Thr) + L-threonine + ATP = L-threonyl-tRNA(Thr) + AMP + diphosphate + H(+). Its function is as follows. Catalyzes the attachment of threonine to tRNA(Thr) in a two-step reaction: L-threonine is first activated by ATP to form Thr-AMP and then transferred to the acceptor end of tRNA(Thr). Also edits incorrectly charged L-seryl-tRNA(Thr). This is Threonine--tRNA ligase from Shigella dysenteriae serotype 1 (strain Sd197).